Consider the following 1648-residue polypeptide: AT-rich interactive domain-containing protein arid-1 (1648 aa).

Disordered regions lie at residues 150-270 and 284-307; these read ISEA…PVIN and RKLE…EEKL. 3 stretches are compositionally biased toward acidic residues: residues 166–193, 219–228, and 251–260; these read DDDE…DTEE, TQSEESSADS, and SDEEDQEDLA. The span at 261–270 shows a compositional bias: polar residues; that stretch reads TTDSENPVIN. The 91-residue stretch at 655 to 745 folds into the ARID domain; the sequence is AETKDLFVAM…FLESYLAINT (91 aa). 3 disordered regions span residues 763-935, 1095-1563, and 1628-1648; these read VLPG…KEDT, SEKR…KPHD, and KTAS…TPRP. Over residues 848–860 the composition is skewed to acidic residues; the sequence is SDDVTDVPDDMTD. Composition is skewed to basic and acidic residues over residues 861 to 878 and 925 to 935; these read HEDL…ERKS and SEGRGPRKEDT. Composition is skewed to acidic residues over residues 1102-1112 and 1145-1154; these read DDDESSDSDTD and GDEEAEEEVK. Residues 1165 to 1185 are compositionally biased toward low complexity; it reads QESPPTTSQGTTTPETAATGG. Residues 1195 to 1208 show a composition bias toward pro residues; the sequence is YPPVPEELVPPPPV. Positions 1213-1251 are enriched in polar residues; it reads FPSTDRFSSGGSSNYPTLSRQGSINSMASPMFSPNSDLS. The segment covering 1313 to 1326 has biased composition (basic and acidic residues); that stretch reads RASERSIDSASEHH. A compositionally biased stretch (polar residues) spans 1348 to 1357; that stretch reads ISTTQPTDTS. Residues 1377-1392 are compositionally biased toward low complexity; that stretch reads ASPTLLTSGPLTLSSS. The segment covering 1393–1404 has biased composition (pro residues); sequence APPPPPASPAPP. 2 stretches are compositionally biased toward low complexity: residues 1474 to 1486 and 1531 to 1541; these read STTT…PKSI and TPTTMTTSTPT. Residues 1542–1551 show a composition bias toward polar residues; sequence RADSFQTQKN.

The protein localises to the nucleus. DNA-binding protein which modulates activity of several transcription factors. Plays a role in the modulation of endoplasmic reticulum (ER) homeostasis during chemical and pathogen stress, including exposure to the Gram-negative bacterium P.aeruginosa. The sequence is that of AT-rich interactive domain-containing protein arid-1 from Caenorhabditis elegans.